The following is a 274-amino-acid chain: Orotidine 5'-phosphate decarboxylase (274 aa).

The active-site Proton donor is the lysine 95.

This sequence belongs to the OMP decarboxylase family. Type 2 subfamily.

The catalysed reaction is orotidine 5'-phosphate + H(+) = UMP + CO2. It participates in pyrimidine metabolism; UMP biosynthesis via de novo pathway; UMP from orotate: step 2/2. The polypeptide is Orotidine 5'-phosphate decarboxylase (Mycobacterium avium (strain 104)).